The following is a 226-amino-acid chain: UPF0173 metal-dependent hydrolase Dgeo_0136 (226 aa).

It belongs to the UPF0173 family.

In Deinococcus geothermalis (strain DSM 11300 / CIP 105573 / AG-3a), this protein is UPF0173 metal-dependent hydrolase Dgeo_0136.